The following is an 876-amino-acid chain: GRB2-associated and regulator of MAPK protein (876 aa).

The segment at 9 to 318 is CABIT; sequence KDVKWSSASF…NLIKGEVWQD (310 aa). Tyr451 carries the phosphotyrosine modification. Disordered regions lie at residues 460-569 and 708-741; these read SVKR…TLSY and DRMLGDNSTKQSLSCPALPPRAPKPSEGNALSEP. Polar residues predominate over residues 461–471; sequence VKRSGQPLTRS. Positions 532–549 are enriched in pro residues; the sequence is PPVPPRSSKPSSPTPSVP. Residues 556 to 569 are compositionally biased toward polar residues; it reads VRQQTRSPSPTLSY. Residues 811–876 form the SAM domain; sequence LSVEEVSKSL…QFINGWRPKM (66 aa).

The protein belongs to the GAREM family.

Adapter protein that may provide a link between cell surface epidermal growth factor receptor and the MAPK/ERK signaling pathway. May promote cell proliferation. In Xenopus laevis (African clawed frog), this protein is GRB2-associated and regulator of MAPK protein (garem1).